The sequence spans 360 residues: Lipid-A-disaccharide synthase (360 aa).

The protein belongs to the LpxB family.

The enzyme catalyses a lipid X + a UDP-2-N,3-O-bis[(3R)-3-hydroxyacyl]-alpha-D-glucosamine = a lipid A disaccharide + UDP + H(+). Its pathway is bacterial outer membrane biogenesis; LPS lipid A biosynthesis. Condensation of UDP-2,3-diacylglucosamine and 2,3-diacylglucosamine-1-phosphate to form lipid A disaccharide, a precursor of lipid A, a phosphorylated glycolipid that anchors the lipopolysaccharide to the outer membrane of the cell. In Helicobacter pylori (strain P12), this protein is Lipid-A-disaccharide synthase.